Consider the following 182-residue polypeptide: Ribosome maturation factor RimM (182 aa).

The 78-residue stretch at 99-176 (DDEYYHADLI…ELPAEIEGDT (78 aa)) folds into the PRC barrel domain.

The protein belongs to the RimM family. In terms of assembly, binds ribosomal protein uS19.

It is found in the cytoplasm. Its function is as follows. An accessory protein needed during the final step in the assembly of 30S ribosomal subunit, possibly for assembly of the head region. Essential for efficient processing of 16S rRNA. May be needed both before and after RbfA during the maturation of 16S rRNA. It has affinity for free ribosomal 30S subunits but not for 70S ribosomes. In Rhodopseudomonas palustris (strain HaA2), this protein is Ribosome maturation factor RimM.